A 530-amino-acid polypeptide reads, in one-letter code: Estrogen receptor beta (530 aa).

Residues 1–148 are modulating; sequence MEIKNSPSSL…SPSAKRDAHF (148 aa). Position 61 is a phosphoserine; alternate (Ser61). Ser61 carries an O-linked (GlcNAc) serine; alternate glycan. Residues Ser87 and Ser105 each carry the phosphoserine; by MAPK modification. 2 NR C4-type zinc fingers span residues 149–169 and 185–209; these read CAVC…CEGC and CPAT…LRKC. Positions 149-214 form a DNA-binding region, nuclear receptor; the sequence is CAVCSDYASG…RLRKCYEVGM (66 aa). Positions 264-498 constitute an NR LBD domain; it reads SPEQLVLTLL…DLLLEMLNAH (235 aa). A compositionally biased stretch (polar residues) spans 506 to 515; that stretch reads SISGSECCST. The tract at residues 506–530 is disordered; that stretch reads SISGSECCSTEDSKSKEGSQNLQSQ.

It belongs to the nuclear hormone receptor family. NR3 subfamily. Binds DNA as a homodimer. Can form a heterodimer with ESR1. Interacts with NCOA1, NCOA3, NCOA5 and NCOA6 coactivators, leading to a strong increase of transcription of target genes. Interacts with UBE1C and AKAP13. Interacts with DNTTIP2. Interacts with CCDC62 in the presence of estradiol/E2; this interaction seems to enhance the transcription of target genes. Interacts with DNAAF4. Interacts with PRMT2. Interacts with CCAR2 (via N-terminus) in a ligand-independent manner. Interacts with RBM39, in the presence of estradiol (E2). Interacts with STUB1/CHIP. Post-translationally, phosphorylation at Ser-87 and Ser-105 recruits NCOA1. Expressed in prostate, ovary, Leydig cells and in epithelium of the efferent ductules and of the initial segment of the epididymis.

The protein localises to the nucleus. Nuclear hormone receptor. Binds estrogens with an affinity similar to that of ESR1/ER-alpha, and activates expression of reporter genes containing estrogen response elements (ERE) in an estrogen-dependent manner. In Mus musculus (Mouse), this protein is Estrogen receptor beta (Esr2).